The following is a 1392-amino-acid chain: DNA-directed RNA polymerase subunit beta (1392 aa).

It belongs to the RNA polymerase beta chain family. In terms of assembly, the RNAP catalytic core consists of 2 alpha, 1 beta, 1 beta' and 1 omega subunit. When a sigma factor is associated with the core the holoenzyme is formed, which can initiate transcription.

It carries out the reaction RNA(n) + a ribonucleoside 5'-triphosphate = RNA(n+1) + diphosphate. Its function is as follows. DNA-dependent RNA polymerase catalyzes the transcription of DNA into RNA using the four ribonucleoside triphosphates as substrates. This chain is DNA-directed RNA polymerase subunit beta, found in Neisseria meningitidis serogroup B (strain ATCC BAA-335 / MC58).